We begin with the raw amino-acid sequence, 359 residues long: MEPISVSIYTSDNYSEEVGSGDYDSNKEPCFRDENVHFNRIFLPTIYFIIFLTGIVGNGLVILVMGYQKKLRSMTDKYRLHLSVADLLFVITLPFWAVDAMADWYFGKFLCKAVHIIYTVNLYSSVLILAFISLDRYLAIVHATNSQRPRKLLAEKAVYVGVWIPALLLTIPDFIFADVSQGDISQGDDRYICDRLYPDSLWMVVFQFQHIMVGLILPGIVILSCYCIIISKLSHSKGHQKRKALKTTVILILAFFACWLPYYVGISIDSFILLGVIKQGCDFESIVHKWISITEALAFFHCCLNPILYAFLGAKFKSSAQHALNSMSRGSSLKILSKGKRGGHSSVSTESESSSFHSS.

The tract at residues 1-23 is important for chemokine binding and signaling; it reads MEPISVSIYTSDNYSEEVGSGDY. Topologically, residues 1-40 are extracellular; it reads MEPISVSIYTSDNYSEEVGSGDYDSNKEPCFRDENVHFNR. A Sulfotyrosine modification is found at tyrosine 9. Residue asparagine 13 is glycosylated (N-linked (GlcNAc...) asparagine). The residue at position 14 (tyrosine 14) is a Sulfotyrosine. O-linked (Xyl...) (chondroitin sulfate) serine glycosylation occurs at serine 20. Tyrosine 23 bears the Sulfotyrosine mark. Disulfide bonds link cysteine 30-cysteine 281 and cysteine 111-cysteine 193. Residues 41–65 traverse the membrane as a helical segment; it reads IFLPTIYFIIFLTGIVGNGLVILVM. The Cytoplasmic segment spans residues 66–79; sequence GYQKKLRSMTDKYR. The chain crosses the membrane as a helical span at residues 80–101; the sequence is LHLSVADLLFVITLPFWAVDAM. The segment at 96 to 99 is chemokine binding; that stretch reads WAVD. The Extracellular portion of the chain corresponds to 102-112; the sequence is ADWYFGKFLCK. Residues 113–132 form a helical membrane-spanning segment; it reads AVHIIYTVNLYSSVLILAFI. The tract at residues 115-119 is chemokine binding; sequence HIIYT. Residues 133–156 are Cytoplasmic-facing; it reads SLDRYLAIVHATNSQRPRKLLAEK. The Important for signaling motif lies at 135–137; sequence DRY. The tract at residues 137–149 is involved in dimerization; when bound to chemokine; that stretch reads YLAIVHATNSQRP. The helical transmembrane segment at 157 to 176 threads the bilayer; that stretch reads AVYVGVWIPALLLTIPDFIF. Over 177–202 the chain is Extracellular; sequence ADVSQGDISQGDDRYICDRLYPDSLW. The interval 193–197 is chemokine binding, important for signaling; that stretch reads CDRLY. The involved in dimerization stretch occupies residues 198 to 217; that stretch reads PDSLWMVVFQFQHIMVGLIL. The helical transmembrane segment at 203–223 threads the bilayer; that stretch reads MVVFQFQHIMVGLILPGIVIL. Residues 224–248 lie on the Cytoplasmic side of the membrane; that stretch reads SCYCIIISKLSHSKGHQKRKALKTT. The chain crosses the membrane as a helical span at residues 249–268; sequence VILILAFFACWLPYYVGISI. Residues 269-289 lie on the Extracellular side of the membrane; it reads DSFILLGVIKQGCDFESIVHK. The tract at residues 273–275 is involved in dimerization; it reads LLG. A helical membrane pass occupies residues 290–309; the sequence is WISITEALAFFHCCLNPILY. The Cytoplasmic portion of the chain corresponds to 310–359; that stretch reads AFLGAKFKSSAQHALNSMSRGSSLKILSKGKRGGHSSVSTESESSSFHSS. 2 positions are modified to phosphoserine: serine 326 and serine 328. Serine 331 and serine 332 each carry phosphoserine; by PKC and GRK6. Positions 335–359 are disordered; that stretch reads ILSKGKRGGHSSVSTESESSSFHSS. Phosphoserine; by GRK6 is present on serine 337. A Glycyl lysine isopeptide (Lys-Gly) (interchain with G-Cter in ubiquitin) cross-link involves residue lysine 338. Low complexity predominate over residues 344 to 359; it reads HSSVSTESESSSFHSS. Serine 346 bears the Phosphoserine; by GRK6 mark. A phosphoserine mark is found at serine 355 and serine 358.

It belongs to the G-protein coupled receptor 1 family. In terms of assembly, monomer. Can form homodimers. Interacts with CD164. Interacts with ARRB2; the interaction is dependent on the C-terminal phosphorylation of CXCR4 and allows activation of MAPK1 and MAPK3. Interacts with ARR3; the interaction is dependent on the C-terminal phosphorylation of CXCR4 and modulates calcium mobilization. Interacts with RNF113A; the interaction, enhanced by CXCL12, promotes CXCR4 ubiquitination and subsequent degradation. Interacts (via the cytoplasmic C-terminal) with ITCH (via the WW domains I and II); the interaction, enhanced by CXCL12, promotes CXCR4 ubiquitination and leads to its degradation. Interacts with extracellular ubiquitin. Interacts with DBN1; this interaction is enhanced by antigenic stimulation. Following LPS binding, may form a complex with GDF5, HSP90AA1 and HSPA8. Post-translationally, phosphorylated on agonist stimulation. Rapidly phosphorylated on serine and threonine residues in the C-terminal. Phosphorylation at Ser-331 and Ser-332 leads to recruitment of ITCH, ubiquitination and protein degradation. Ubiquitinated after ligand binding, leading to its degradation. Ubiquitinated by ITCH at the cell membrane on agonist stimulation. The ubiquitin-dependent mechanism, endosomal sorting complex required for transport (ESCRT), then targets CXCR4 for lysosomal degradation. This process is dependent also on prior Ser-/Thr-phosphorylation in the C-terminal of CXCR4. Also binding of ARRB1 to STAM negatively regulates CXCR4 sorting to lysosomes though modulating ubiquitination of SFR5S. In terms of processing, sulfation is required for efficient binding of CXCL12/SDF-1alpha and promotes its dimerization. Post-translationally, O- and N-glycosylated. N-glycosylation can mask coreceptor function. The O-glycosylation chondroitin sulfate attachment does not affect interaction with CXCL12/SDF-1alpha nor its coreceptor activity. In terms of tissue distribution, lymphocytes, macrophages, neutrophils, microglial cells and astrocytes. Found in spleen, thymus, bone marrow, lymph nodes and, at lower levels in brain, small intestine, stomach and kidney. CXCR4-A is predominant in all tissues tested. During embryonic development, high levels are detected in the endothelium of developing blood vessels and in many regions of the developing brain including the olfactory epithelium, olfactory bulb, hippocampus, cerebellum and spinal cord.

It localises to the cell membrane. Its subcellular location is the cell junction. The protein resides in the early endosome. The protein localises to the late endosome. It is found in the lysosome. In terms of biological role, receptor for the C-X-C chemokine CXCL12/SDF-1 that transduces a signal by increasing intracellular calcium ion levels and enhancing MAPK1/MAPK3 activation. Involved in the AKT signaling cascade. Plays a role in regulation of cell migration, e.g. during wound healing. Acts as a receptor for extracellular ubiquitin; leading to enhanced intracellular calcium ions and reduced cellular cAMP levels. Binds bacterial lipopolysaccharide (LPS) et mediates LPS-induced inflammatory response, including TNF secretion by monocytes. Involved in hematopoiesis and in cardiac ventricular septum formation. Also plays an essential role in vascularization of the gastrointestinal tract, probably by regulating vascular branching and/or remodeling processes in endothelial cells. Involved in cerebellar development. In the CNS, could mediate hippocampal-neuron survival. The polypeptide is C-X-C chemokine receptor type 4 (Cxcr4) (Mus musculus (Mouse)).